The primary structure comprises 346 residues: Probable dual-specificity RNA methyltransferase RlmN (346 aa).

The Proton acceptor role is filled by Glu-90. The Radical SAM core domain maps to 96–330; the sequence is TRDRLTVCVS…VSVRASRGLD (235 aa). A disulfide bond links Cys-103 and Cys-335. Residues Cys-110, Cys-114, and Cys-117 each contribute to the [4Fe-4S] cluster site. S-adenosyl-L-methionine-binding positions include 157-158, Ser-187, 216-218, and Asn-292; these read GE and SLH. Cys-335 functions as the S-methylcysteine intermediate in the catalytic mechanism.

Belongs to the radical SAM superfamily. RlmN family. Requires [4Fe-4S] cluster as cofactor.

The protein resides in the cytoplasm. The enzyme catalyses adenosine(2503) in 23S rRNA + 2 reduced [2Fe-2S]-[ferredoxin] + 2 S-adenosyl-L-methionine = 2-methyladenosine(2503) in 23S rRNA + 5'-deoxyadenosine + L-methionine + 2 oxidized [2Fe-2S]-[ferredoxin] + S-adenosyl-L-homocysteine. It carries out the reaction adenosine(37) in tRNA + 2 reduced [2Fe-2S]-[ferredoxin] + 2 S-adenosyl-L-methionine = 2-methyladenosine(37) in tRNA + 5'-deoxyadenosine + L-methionine + 2 oxidized [2Fe-2S]-[ferredoxin] + S-adenosyl-L-homocysteine. Functionally, specifically methylates position 2 of adenine 2503 in 23S rRNA and position 2 of adenine 37 in tRNAs. This Synechococcus sp. (strain RCC307) protein is Probable dual-specificity RNA methyltransferase RlmN.